The sequence spans 704 residues: Pentatricopeptide repeat-containing protein At4g28010 (704 aa).

PPR repeat units lie at residues 71-105, 106-140, 141-175, 176-210, 211-245, 246-280, 281-315, 316-350, 351-385, 386-416, 423-453, 458-492, 493-527, 528-562, 563-597, 598-632, and 633-667; these read LAFAGNNLMAKLVRSRNHELAFSFYRKMLETDTFI, NFVSLSGLLECYVQMRKTGFAFGVLALMLKRGFAF, NVYNHNILLKGLCRNLECGKAVSLLREMRRNSLMP, DVFSYNTVIRGFCEGKELEKALELANEMKGSGCSW, SLVTWGILIDAFCKAGKMDEAMGFLKEMKFMGLEA, DLVVYTSLIRGFCDCGELDRGKALFDEVLERGDSP, CAITYNTLIRGFCKLGQLKEASEIFEFMIERGVRP, NVYTYTGLIDGLCGVGKTKEALQLLNLMIEKDEEP, NAVTYNIIINKLCKDGLVADAVEIVELMKKRRTRP, DNITYNILLGGLCAKGDLDEASKLLYLMLKD, DVISYNALIHGLCKENRLHQALDIYDLLVEK, DRVTTNILLNSTLKAGDVNKAMELWKQISDSKIVR, NSDTYTAMIDGFCKTGMLNVAKGLLCKMRVSELQP, SVFDYNCLLSSLCKEGSLDQAWRLFEEMQRDNNFP, DVVSFNIMIDGSLKAGDIKSAESLLVGMSRAGLSP, DLFTYSKLINRFLKLGYLDEAISFFDKMVDSGFEP, and DAHICDSVLKYCISQGETDKLTELVKKLVDKDIVL.

The protein belongs to the PPR family. P subfamily.

The chain is Pentatricopeptide repeat-containing protein At4g28010 from Arabidopsis thaliana (Mouse-ear cress).